The chain runs to 295 residues: Probable protein phosphatase 2C 54 (295 aa).

The PPM-type phosphatase domain maps to 78-289 (GHGVVSVMGR…ENINVIVIDL (212 aa)). Mn(2+) contacts are provided by Asp112, Gly113, Asp228, and Glu280.

This sequence belongs to the PP2C family. The cofactor is Mg(2+). It depends on Mn(2+) as a cofactor.

It carries out the reaction O-phospho-L-seryl-[protein] + H2O = L-seryl-[protein] + phosphate. It catalyses the reaction O-phospho-L-threonyl-[protein] + H2O = L-threonyl-[protein] + phosphate. This is Probable protein phosphatase 2C 54 from Arabidopsis thaliana (Mouse-ear cress).